A 78-amino-acid chain; its full sequence is Large ribosomal subunit protein bL28 (78 aa).

The protein belongs to the bacterial ribosomal protein bL28 family.

The chain is Large ribosomal subunit protein bL28 from Colwellia psychrerythraea (strain 34H / ATCC BAA-681) (Vibrio psychroerythus).